Consider the following 189-residue polypeptide: GMP synthase [glutamine-hydrolyzing] subunit A (189 aa).

Residues 3–187 (RIDVIDNHGQ…LSVCDQQSVA (185 aa)) enclose the Glutamine amidotransferase type-1 domain. The active-site Nucleophile is Cys73. Residues His161 and Glu163 contribute to the active site.

In terms of assembly, heterodimer composed of a glutamine amidotransferase subunit (A) and a GMP-binding subunit (B).

The catalysed reaction is XMP + L-glutamine + ATP + H2O = GMP + L-glutamate + AMP + diphosphate + 2 H(+). The protein operates within purine metabolism; GMP biosynthesis; GMP from XMP (L-Gln route): step 1/1. Catalyzes the synthesis of GMP from XMP. This is GMP synthase [glutamine-hydrolyzing] subunit A from Haloarcula marismortui (strain ATCC 43049 / DSM 3752 / JCM 8966 / VKM B-1809) (Halobacterium marismortui).